We begin with the raw amino-acid sequence, 119 residues long: Methylglyoxal synthase (119 aa).

The region spanning 1–119 is the MGS-like domain; sequence MKIALIAHDK…ESAKLIMADI (119 aa). Residues His8, Lys12, 34–37, and 54–55 each bind substrate; these read TGTT and SG. Asp60 serves as the catalytic Proton donor/acceptor. Residue His87 coordinates substrate.

It belongs to the methylglyoxal synthase family.

The catalysed reaction is dihydroxyacetone phosphate = methylglyoxal + phosphate. In terms of biological role, catalyzes the formation of methylglyoxal from dihydroxyacetone phosphate. This Clostridium perfringens (strain 13 / Type A) protein is Methylglyoxal synthase.